Here is a 204-residue protein sequence, read N- to C-terminus: Guanylate kinase (204 aa).

Positions 18–196 (PKLFTISAPA…SYEILKSIFI (179 aa)) constitute a Guanylate kinase-like domain. An ATP-binding site is contributed by 25 to 32 (APAGAGKT).

It belongs to the guanylate kinase family.

Its subcellular location is the cytoplasm. The enzyme catalyses GMP + ATP = GDP + ADP. Its function is as follows. Essential for recycling GMP and indirectly, cGMP. In Chlamydia felis (strain Fe/C-56) (Chlamydophila felis), this protein is Guanylate kinase.